The chain runs to 1199 residues: AP-3 complex subunit delta-1 (1199 aa).

Alanine 2 carries the N-acetylalanine modification. 9 HEAT repeats span residues 34-71 (KYIS…LGYD), 142-179 (DLAR…KYPE), 180-216 (SLRP…RNPK), 218-254 (YLSL…LEPR), 257-296 (KKLI…GMPN), 298-336 (SASI…THPK), 337-373 (SVQS…KKNL), 375-409 (EIVK…QSNY), and 521-558 (VYVQ…ERLP). 2 disordered regions span residues 623 to 695 (LDAW…RYQD) and 724 to 963 (YVKL…EPIP). Phosphoserine occurs at positions 632, 634, and 636. Basic and acidic residues-rich tracts occupy residues 639–651 (EKPK…EEPR) and 665–675 (LARRREARKQE). Positions 659–679 (EEDEEELARRREARKQEQANN) form a coiled coil. Serine 688 carries the phosphoserine modification. Positions 722 to 750 (DQYVKLEEQRRHRQRLEKDKKRKKKEKGK) form a coiled coil. Over residues 732 to 754 (RHRQRLEKDKKRKKKEKGKRRHS) the composition is skewed to basic residues. Serine 754 and serine 755 each carry phosphoserine. A Phosphothreonine modification is found at threonine 758. Serine 760, serine 784, and serine 825 each carry phosphoserine. Over residues 773–790 (ITEEMPENALPSDEDDKD) the composition is skewed to acidic residues. Basic and acidic residues predominate over residues 791–836 (PNDPYRALDIDLDKPLADSEKLPVQKHRNAEAVKSPEKEGVLGVEK). Residues 837–846 (KSKKPKKKEK) are compositionally biased toward basic residues. The stretch at 843–863 (KKEKKTKEREREKKDKKGEDL) forms a coiled coil. The segment covering 847–862 (KTKEREREKKDKKGED) has biased composition (basic and acidic residues). Positions 870-880 (TPPPAAAPIPA) are enriched in pro residues. The segment covering 894–916 (PKDECEVLKGEEEDHVDHDQERK) has biased composition (basic and acidic residues). Residues 911-934 (HDQERKSSRHKKKKHRKEKEKEER) adopt a coiled-coil conformation. Residues 917 to 928 (SSRHKKKKHRKE) are compositionally biased toward basic residues.

This sequence belongs to the adaptor complexes large subunit family. As to quaternary structure, adaptor protein complex 3 (AP-3) is a heterotetramer composed of two large adaptins (delta-type subunit AP3D1 and beta-type subunit AP3B1 or AP3B2), a medium adaptin (mu-type subunit AP3M1 or AP3M2) and a small adaptin (sigma-type subunit APS1 or AP3S2). AP-3 associates with the BLOC-1 complex. Interacts with SLC30A2. Interacts with CLN3 (via dileucine motif); this interaction facilitates lysosomal targeting.

Its subcellular location is the cytoplasm. It localises to the golgi apparatus membrane. Part of the AP-3 complex, an adaptor-related complex which is not clathrin-associated. The complex is associated with the Golgi region as well as more peripheral structures. It facilitates the budding of vesicles from the Golgi membrane and may be directly involved in trafficking to lysosomes. Involved in process of CD8+ T-cell and NK cell degranulation. In concert with the BLOC-1 complex, AP-3 is required to target cargos into vesicles assembled at cell bodies for delivery into neurites and nerve terminals. This chain is AP-3 complex subunit delta-1 (Ap3d1), found in Mus musculus (Mouse).